A 1626-amino-acid polypeptide reads, in one-letter code: DNA topoisomerase 2-beta (1626 aa).

Alanine 2 bears the N-acetylalanine mark. Lysine 3 carries the post-translational modification N6-acetyllysine. Residues glutamine 28, asparagine 29, lysine 33, and lysine 34 each participate in a glycyl lysine isopeptide (Lys-Gly) (interchain with G-Cter in SUMO2) cross-link. ATP is bound by residues asparagine 112, asparagine 141, and 169-171 (SSN). Glycyl lysine isopeptide (Lys-Gly) (interchain with G-Cter in SUMO2) cross-links involve residues lysine 177 and lysine 178. 182-189 (GRNGYGAK) serves as a coordination point for ATP. Glycyl lysine isopeptide (Lys-Gly) (interchain with G-Cter in SUMO2) cross-links involve residues lysine 228 and lysine 299. Positions 363 to 365 (KKK) are interaction with DNA. Residues lysine 367 and lysine 373 each participate in a glycyl lysine isopeptide (Lys-Gly) (interchain with G-Cter in SUMO2) cross-link. An ATP-binding site is contributed by 397–399 (QTK). Glycyl lysine isopeptide (Lys-Gly) (interchain with G-Cter in SUMO2) cross-links involve residues lysine 437, lysine 439, and lysine 446. Positions 476–593 (CTLILTEGDS…SLLKHGFLEE (118 aa)) constitute a Toprim domain. Positions 482, 562, and 564 each coordinate Mg(2+). Glycyl lysine isopeptide (Lys-Gly) (interchain with G-Cter in SUMO2) cross-links involve residues lysine 600, lysine 605, lysine 635, lysine 643, lysine 646, lysine 676, and lysine 712. The Topo IIA-type catalytic domain maps to 736–1189 (IPSLVDGFKP…SPSDLWKEDL (454 aa)). Tyrosine 826 (O-(5'-phospho-DNA)-tyrosine intermediate) is an active-site residue. An interaction with DNA region spans residues 1011-1020 (KLQTTLTCNS). The short motif at 1034 to 1044 (ETVQDILKEFF) is the Nuclear export signal element. Lysine 1092 participates in a covalent cross-link: Glycyl lysine isopeptide (Lys-Gly) (interchain with G-Cter in SUMO2). The segment at 1110-1140 (AWKEAQEKAAEEDETQNQHDDSSSDSGTPSG) is disordered. Glycyl lysine isopeptide (Lys-Gly) (interchain with G-Cter in SUMO2) cross-links involve residues lysine 1214, lysine 1217, lysine 1226, and lysine 1227. Serine 1236 carries the post-translational modification Phosphoserine. Glycyl lysine isopeptide (Lys-Gly) (interchain with G-Cter in SUMO2) cross-links involve residues lysine 1250, lysine 1262, and lysine 1271. A disordered region spans residues 1274–1604 (FDEEFSGAPV…PSLPRTGRAR (331 aa)). The residue at position 1292 (threonine 1292) is a Phosphothreonine. Glycyl lysine isopeptide (Lys-Gly) (interchain with G-Cter in SUMO2) cross-links involve residues lysine 1323 and lysine 1327. Composition is skewed to basic and acidic residues over residues 1334–1344 (PWSDDESKSES) and 1358–1370 (SLLR…RPKY). Serine 1336, serine 1340, serine 1342, serine 1344, and serine 1358 each carry phosphoserine. Tyrosine 1370 is subject to Phosphotyrosine. Over residues 1374 to 1392 (FSEEEDDDADDDDDDNNDL) the composition is skewed to acidic residues. The residue at position 1375 (serine 1375) is a Phosphoserine. A Glycyl lysine isopeptide (Lys-Gly) (interchain with G-Cter in SUMO2) cross-link involves residue lysine 1398. Serine 1400 carries the phosphoserine modification. Residue threonine 1403 is modified to Phosphothreonine. Position 1413 is a phosphoserine (serine 1413). At tyrosine 1421 the chain carries Phosphotyrosine. Serine 1424 is subject to Phosphoserine. Residues 1430-1442 (ATPEKSLHDKKSQ) are compositionally biased toward basic and acidic residues. A Glycyl lysine isopeptide (Lys-Gly) (interchain with G-Cter in SUMO2) cross-link involves residue lysine 1440. Phosphoserine is present on residues serine 1441, serine 1452, and serine 1454. Lysine 1456 is covalently cross-linked (Glycyl lysine isopeptide (Lys-Gly) (interchain with G-Cter in SUMO2)). Basic and acidic residues predominate over residues 1456–1466 (KSEDDSAKFDS). Phosphoserine occurs at positions 1461, 1466, 1473, and 1476. A Glycyl lysine isopeptide (Lys-Gly) (interchain with G-Cter in SUMO2) cross-link involves residue lysine 1490. Positions 1506–1512 (KPKRAPK) are interaction with PLSCR1. Phosphoserine is present on residues serine 1522, serine 1524, and serine 1526. Positions 1539 to 1549 (GKGRGAKKRKA) are enriched in basic residues. Phosphoserine is present on residues serine 1550 and serine 1552. Residues 1563 to 1574 (KTSKTTSKKPKK) are compositionally biased toward basic residues. Threonine 1575 carries the phosphothreonine modification. Phosphoserine occurs at positions 1576 and 1581. Position 1592 is a phosphothreonine (threonine 1592). At serine 1596 the chain carries Phosphoserine. Tyrosine 1609 carries the phosphotyrosine modification. Position 1613 is a phosphoserine (serine 1613).

This sequence belongs to the type II topoisomerase family. Homodimer. Interacts with KIAA1210. Interacts with PLSCR1. Requires Mg(2+) as cofactor. The cofactor is Mn(2+). It depends on Ca(2+) as a cofactor. In terms of processing, (Microbial infection) Deubiquitinated by Epstein-Barr virus BPLF1; leading to stabilized SUMOylated TOP2A trapped in cleavage complexes, which halts the DNA damage response to TOP2A-induced double-strand DNA breaks. Post-translationally, SUMOylated. As to expression, expressed in the tonsil, spleen, lymph node, thymus, skin, pancreas, testis, colon, kidney, liver, brain and lung. Also found in breast, colon and lung carcinomas, Hodgkin's disease, large-cell non-Hodgkin's lymphoma, lymphocytic lymphomas and seminomas.

The protein resides in the nucleus. It is found in the nucleolus. It localises to the nucleoplasm. It carries out the reaction ATP-dependent breakage, passage and rejoining of double-stranded DNA.. Its function is as follows. Key decatenating enzyme that alters DNA topology by binding to two double-stranded DNA molecules, generating a double-stranded break in one of the strands, passing the intact strand through the broken strand, and religating the broken strand. Plays a role in B-cell differentiation. The chain is DNA topoisomerase 2-beta (TOP2B) from Homo sapiens (Human).